Reading from the N-terminus, the 350-residue chain is tRNA N6-adenosine threonylcarbamoyltransferase (350 aa).

Residues histidine 113 and histidine 117 each contribute to the Fe cation site. Residues 135 to 139 (LVSGG), aspartate 169, glycine 182, aspartate 186, and asparagine 282 each bind substrate. Aspartate 310 provides a ligand contact to Fe cation.

This sequence belongs to the KAE1 / TsaD family. It depends on Fe(2+) as a cofactor.

The protein resides in the cytoplasm. It catalyses the reaction L-threonylcarbamoyladenylate + adenosine(37) in tRNA = N(6)-L-threonylcarbamoyladenosine(37) in tRNA + AMP + H(+). In terms of biological role, required for the formation of a threonylcarbamoyl group on adenosine at position 37 (t(6)A37) in tRNAs that read codons beginning with adenine. Is involved in the transfer of the threonylcarbamoyl moiety of threonylcarbamoyl-AMP (TC-AMP) to the N6 group of A37, together with TsaE and TsaB. TsaD likely plays a direct catalytic role in this reaction. The protein is tRNA N6-adenosine threonylcarbamoyltransferase of Corynebacterium diphtheriae (strain ATCC 700971 / NCTC 13129 / Biotype gravis).